The primary structure comprises 396 residues: Anticodon nuclease (396 aa).

Functionally, anticodon endonuclease (ACNase) that triggers the cleavage ligation of tRNA(Lys). It is activated by T4 stp protein and masked by the prrD protein (the endonuclease subunit of EcoprrI). The prr locus restricts phage T4 mutants lacking polynucleotide kinase or RNA ligase; T4 mutants lacking these genes manifest a T4-induced anticodon nuclease (ACNase). It is thought that Stp and other T4-encoded ACNase factors counteract the masking agents, thus activating the latent ACNase. This Escherichia coli protein is Anticodon nuclease.